Reading from the N-terminus, the 424-residue chain is Probable biofilm formation methyltransferase WspC (424 aa).

The CheR-type methyltransferase domain maps to 1-263; sequence MNEQRFFRFL…IAQSFAYVRH (263 aa). S-adenosyl-L-methionine is bound by residues Thr-68, Arg-72, Glu-109, Asp-133, 187–188, and 206–207; these read NV and RN. The TPR repeat unit spans residues 355–388; sequence AQVYYWLGLLSDTEGDAQQALSHYRKALYLEPQH.

Monomer. The TPR repeat does not mediate self-association.

Involved in biofilm formation. This chain is Probable biofilm formation methyltransferase WspC (wspC), found in Pseudomonas putida (strain ATCC 47054 / DSM 6125 / CFBP 8728 / NCIMB 11950 / KT2440).